A 120-amino-acid chain; its full sequence is Small ribosomal subunit protein uS12c (120 aa).

This sequence belongs to the universal ribosomal protein uS12 family. Part of the 30S ribosomal subunit.

The protein localises to the plastid. The protein resides in the apicoplast. With S4 and S5 plays an important role in translational accuracy. Located at the interface of the 30S and 50S subunits. The protein is Small ribosomal subunit protein uS12c (rps12) of Eimeria tenella (Coccidian parasite).